Reading from the N-terminus, the 265-residue chain is UPF0026 protein slr1464 (265 aa).

The 237-residue stretch at 16 to 252 (RYGRSLGIDP…QNLAKKISGA (237 aa)) folds into the Radical SAM core domain. Residues Cys-32, Cys-36, and Cys-39 each contribute to the [4Fe-4S] cluster site. The disordered stretch occupies residues 204–230 (RPTRPKPLQRELEGRGNHTGTPYGDRP).

The protein belongs to the UPF0026 family. Requires [4Fe-4S] cluster as cofactor.

The sequence is that of UPF0026 protein slr1464 from Synechocystis sp. (strain ATCC 27184 / PCC 6803 / Kazusa).